A 418-amino-acid chain; its full sequence is F-box protein At1g10780 (418 aa).

An F-box domain is found at 1–47; sequence MDSLPDAILQYILSYLTSARDVAACNCVSKRWKESTDSVKSVVFHRN.

The sequence is that of F-box protein At1g10780 from Arabidopsis thaliana (Mouse-ear cress).